Reading from the N-terminus, the 148-residue chain is Endothelial differentiation-related factor 1 (148 aa).

N-acetylalanine is present on alanine 2. The residue at position 4 (serine 4) is a Phosphoserine. Residue lysine 25 is modified to N6-methyllysine. Over residues arginine 33 to lysine 42 the composition is skewed to basic and acidic residues. A disordered region spans residues arginine 33 to glutamate 66. Residues aspartate 37 to arginine 113 form an interaction with NR5A2, PPARG and NR1H3 region. Positions glutamine 48–threonine 58 are enriched in polar residues. An interaction with TBP and NR5A1 region spans residues histidine 69–aspartate 108. Residues isoleucine 81–lysine 88 carry the IQ motif motif. The HTH cro/C1-type domain occupies isoleucine 81–lysine 135. The segment at residues glutamine 92–serine 111 is a DNA-binding region (H-T-H motif).

As to quaternary structure, interacts with TBP and the transcription factor IID (TFIID) complex, NR5A2, NR1H3 and PPARG. Interaction with TBP is regulated by phosphorylation. Binds NR5A1, ATF1, FOS and JUN via their conserved basic region. Binding to calmodulin is regulated by calcium and phosphorylation of the IQ motif. Post-translationally, phosphorylated (by PKA and PKC). In terms of tissue distribution, expressed in brain, liver, lung, kidney and heart (at protein level). Ubiquitously expressed. More abundant in heart, pancreas, liver, intestine and adipose tissues.

The protein resides in the cytoplasm. It localises to the nucleus. Functionally, transcriptional coactivator stimulating NR5A1 and ligand-dependent NR1H3/LXRA and PPARG transcriptional activities. Enhances the DNA-binding activity of ATF1, ATF2, CREB1 and NR5A1. Regulates nitric oxid synthase activity probably by sequestering calmodulin in the cytoplasm. May function in endothelial cells differentiation, hormone-induced cardiomyocytes hypertrophy and lipid metabolism. This chain is Endothelial differentiation-related factor 1 (EDF1), found in Homo sapiens (Human).